A 629-amino-acid polypeptide reads, in one-letter code: uncharacterized protein (629 aa).

The segment covering 1-11 (MSDDQQNGKQN) has biased composition (polar residues). 4 disordered regions span residues 1–24 (MSDD…EQDD), 62–87 (SNNN…SNYN), 197–464 (SEES…SSLI), and 493–560 (PTPT…STPD). The segment covering 247–264 (PSSSSSSSSLINSPTTSK) has biased composition (low complexity). A compositionally biased stretch (polar residues) spans 274 to 288 (PTINPKSLFGLSSTI). Residues 294–430 (VKTEKEKEKE…DETLNKETPH (137 aa)) show a composition bias toward basic and acidic residues. Composition is skewed to low complexity over residues 434 to 464 (PHIT…SSLI) and 493 to 554 (PTPT…NNNN).

This is an uncharacterized protein from Dictyostelium discoideum (Social amoeba).